We begin with the raw amino-acid sequence, 259 residues long: Oxidase ustYb (259 aa).

A helical membrane pass occupies residues 36–56 (IIYTSLAFVGFIEILFFGIFF). N-linked (GlcNAc...) asparagine glycans are attached at residues asparagine 102 and asparagine 122. 2 consecutive short sequence motifs (HXXHC) follow at residues 147–151 (HQLHC) and 197–201 (HVDHC).

This sequence belongs to the ustYa family.

Its subcellular location is the membrane. It participates in mycotoxin biosynthesis. Its function is as follows. Oxidase; part of the gene cluster that mediates the biosynthesis of the secondary metabolite ustiloxin B, an antimitotic tetrapeptide. First, ustA is processed by the subtilisin-like endoprotease Kex2 that is outside the ustiloxin B gene cluster, at the C-terminal side of Arg-Lys, after transfer to Golgi apparatus through the endoplasmic reticulum (ER). Cleavage by KEX2 generates 16 peptides YAIG-I to YAIG-XVI. To process the precursor peptide further, at least two peptidases are necessary to cleave the N-terminal and C-terminal sides of the Tyr-Ala-Ile-Gly core peptide which serves as backbone for the synthesis of ustiloxin B, through cyclization and modification of the tyrosine with a non-protein coding amino acid, norvaline. One of the two peptidases must be the serine peptidase ustP; and the other pepdidase is probably ustH. Macrocyclization of the core peptide derived from ustA requires the tyrosinase ustQ, as well as the homologous oxidases ustYa and ustYb, and leads to the production of the first cyclization product N-desmethylustiloxin F. For the formation of N-desmethylustiloxin F, three oxidation steps are required, hydroxylation at the benzylic position, hydroxylation at either the aromatic ring of Tyr or beta-position of Ile, and oxidative cyclization. UstQ may catalyze the oxidation of a phenol moiety, whereas the ustYa and ustYb are most likely responsible for the remaining two-step oxidations. N-desmethylustiloxin F is then methylated by ustM to yield ustiloxin F which in turn substrate of the cytochrome P450 monooxygenase ustC which catalyzes the formation of S-deoxyustiloxin H. The flavoprotein monooxygenases ustF1 and ustF2 then participate in the modification of the side chain of S-deoxyustiloxin H, leading to the synthesis of an oxime intermediate, via ustiloxin H. Finally, carboxylative dehydration performed by the cysteine desulfurase-like protein ustD yields ustiloxin B. The sequence is that of Oxidase ustYb from Aspergillus flavus (strain ATCC 200026 / FGSC A1120 / IAM 13836 / NRRL 3357 / JCM 12722 / SRRC 167).